The following is a 584-amino-acid chain: UvrABC system protein C (584 aa).

Residues 14 to 91 (HKPGCYLWKD…IKTHLPKYNI (78 aa)) enclose the GIY-YIG domain. In terms of domain architecture, UVR spans 192–227 (DHILMILQTKEQHAVTKLDFENAQKYAEQQKALTSI).

The protein belongs to the UvrC family. In terms of assembly, interacts with UvrB in an incision complex.

It is found in the cytoplasm. Functionally, the UvrABC repair system catalyzes the recognition and processing of DNA lesions. UvrC both incises the 5' and 3' sides of the lesion. The N-terminal half is responsible for the 3' incision and the C-terminal half is responsible for the 5' incision. In Ureaplasma parvum serovar 3 (strain ATCC 27815 / 27 / NCTC 11736), this protein is UvrABC system protein C.